The primary structure comprises 283 residues: Cyclic AMP-dependent transcription factor ATF-5 (283 aa).

Residues 1-21 (MSLLATLGLELDRALLPASGL) are required for protein stabilization induced by IL1B. Residue lysine 29 is modified to N6-acetyllysine; by EP300. Disordered stretches follow at residues 118–154 (DAPL…PQPP) and 168–241 (SEAG…EGEC). An interaction with PTP4A1 region spans residues 119–218 (APLLPPPSPP…GDRKQKKRDQ (100 aa)). 2 stretches are compositionally biased toward pro residues: residues 121–145 (LLPP…PLPL) and 183–203 (PQQP…PYPS). The bZIP domain maps to 209–272 (GDRKQKKRDQ…QYVKDLLIEV (64 aa)). Residues 211-231 (RKQKKRDQNKSAALRYRQRKR) are basic motif. The segment at 237–251 (LEGECQGLEARNREL) is leucine-zipper. Serine 257 carries the post-translational modification Phosphoserine.

The protein belongs to the bZIP family. In terms of assembly, binds DNA as a dimer. Interacts with PTP4A1/PRL-1. Interacts with CCND3, but not with CCND1 or CCND2. Interacts with HSPA1A or HSPA1B; the interaction protects ATF5 from degradation via proteasome-dependent and caspase-dependent processes. Interacts (via C-terminal region) with NPM1 (via C-terminal region); the interaction leads to loss of association between HSPA1A or HSPA1B and ATF5 and promotes ATF5 degradation via proteasome-dependent and caspase-dependent processes. Interacts with NLK; the interaction stabilizes ATF5 at the protein level in a kinase-independent manner. Interacts with alpha-tubulin, gamma-tubulin members TUBGCP2 and TUBGCP4, PCNT; the ATF5:PCNT:polyglutamylated tubulin (PGT) tripartite unites the mother centriole and the pericentriolar material (PCM) in the centrosome. Interacts with CEBPB and EP300; EP300 is required for ATF5 and CEBPB interaction and DNA binding. Post-translationally, acetylated at Lys-29 by EP300, the acetylation enhances the interaction with CEBPB, DNA-binding and transactivation activity. In terms of processing, ubiquitinated by CDC34 and UBE2B in order to be degraded by the proteasome. Cisplatin inhibits ubiquitination and proteasome-mediated degradation by inhibiting the interaction with CDC34. Ubiquitination and degradation by the proteasome are inhibited by NLK in a kinase-independent manner. Phosphorylated by NLK, probably at Ser-92 and Ser-126. As to expression, highly expressed in liver and at lower levels in heart, brain, lung, kidney, adipose tissue, and skeletal muscle. Expressed in some immature and in all mature olfactory sensory neurons (at protein level).

The protein localises to the cytoplasm. The protein resides in the nucleus. Its subcellular location is the cytoskeleton. It is found in the microtubule organizing center. It localises to the centrosome. In terms of biological role, transcription factor that either stimulates or represses gene transcription through binding of different DNA regulatory elements such as cAMP response element (CRE) (consensus: 5'-GTGACGT[AC][AG]-3'), ATF5-specific response element (ARE) (consensus: 5'-C[CT]TCT[CT]CCTT[AT]-3') but also the amino acid response element (AARE), present in many viral and cellular promoters. Critically involved, often in a cell type-dependent manner, in cell survival, proliferation, and differentiation. Its transcriptional activity is enhanced by CCND3 and slightly inhibited by CDK4. Important regulator of the cerebral cortex formation, functions in cerebral cortical neuroprogenitor cells to maintain proliferation and to block differentiation into neurons. Must be down-regulated in order for such cells to exit the cycle and differentiate. Participates in the pathways by which SHH promotes cerebellar granule neuron progenitor cells proliferation. Critical for survival of mature olfactory sensory neurons (OSN), directs expression of OSN-specific genes. May be involved in osteogenic differentiation. Promotes cell proliferation and survival by inducing the expression of EGR1 sinergistically with ELK1. Once acetylated by EP300, binds to ARE sequences on target genes promoters, such as BCL2 and EGR1. Plays an anti-apoptotic role through the transcriptional regulation of BCL2, this function seems to be cell type-dependent. Cooperates with NR1I3/CAR in the transcriptional activation of CYP2B6 in liver. In hepatic cells, represses CRE-dependent transcription and inhibits proliferation by blocking at G2/M phase. May act as a negative regulator of IL1B transduction pathway in liver. Upon IL1B stimulus, cooperates with NLK to activate the transactivation activity of C/EBP subfamily members. Besides its function of transcription factor, acts as a cofactor of CEBPB to activate CEBPA and promote adipocyte differentiation. Regulates centrosome dynamics in a cell-cycle- and centriole-age-dependent manner. Forms 9-foci symmetrical ring scaffold around the mother centriole to control centrosome function and the interaction between centrioles and pericentriolar material. This chain is Cyclic AMP-dependent transcription factor ATF-5 (Atf5), found in Mus musculus (Mouse).